The sequence spans 184 residues: MLIILKENITTLGKLGEVVKVKPGYARNFLFPQKKAMKATKENLIKLEEQRLLLEEENTKKLNAAKVLASSLHDKFIILIKQASEDGKIFGSVTTREIAKTLLQEGYDISHHSLSLGGISIKNLGEYQVNIELHSKVIVPITIYVVRSEKDAHELRQAKLQNQKSEQQEAEQDASKEAADADDS.

The interval Arg-156 to Ser-184 is disordered. The segment covering Asp-173–Ser-184 has biased composition (basic and acidic residues).

Belongs to the bacterial ribosomal protein bL9 family.

Its function is as follows. Binds to the 23S rRNA. This chain is Large ribosomal subunit protein bL9, found in Wolbachia pipientis subsp. Culex pipiens (strain wPip).